A 107-amino-acid polypeptide reads, in one-letter code: Nucleoid-associated protein Xfasm12_1216 (107 aa).

The protein belongs to the YbaB/EbfC family. As to quaternary structure, homodimer.

Its subcellular location is the cytoplasm. It is found in the nucleoid. In terms of biological role, binds to DNA and alters its conformation. May be involved in regulation of gene expression, nucleoid organization and DNA protection. This is Nucleoid-associated protein Xfasm12_1216 from Xylella fastidiosa (strain M12).